Here is a 410-residue protein sequence, read N- to C-terminus: Class E basic helix-loop-helix protein 41 (410 aa).

K31 is covalently cross-linked (Glycyl lysine isopeptide (Lys-Gly) (interchain with G-Cter in SUMO2)). One can recognise a bHLH domain in the interval 44–99 (TYKLPHRLIEKKRRDRINECIAQLKDLLPEHLKLTTLGHLEKAVVLELTLKHLKAL). K121 is covalently cross-linked (Glycyl lysine isopeptide (Lys-Gly) (interchain with G-Cter in SUMO2)). An Orange domain is found at 131 to 166 (FHSGFQTCAKEVLQYLARFESWTPREPRCAQLVSHL). Disordered regions lie at residues 209-251 (IQRT…SAAP) and 371-410 (EVAPPGSLRPQHAHSRTHLPHAVNPESSQEDATQPAKDAP). K240 is covalently cross-linked (Glycyl lysine isopeptide (Lys-Gly) (interchain with G-Cter in SUMO2)).

In terms of assembly, homodimer. Heterodimer with BHLHE40/DEC1. Interacts with CIART. Interacts with BMAL1 and RXRA. Interacts with NR0B2 and HNF1A. As to expression, highly expressed in the caudate putamen, pineal gland, granular cell layer of the cerebellum, olfactory bulb, piriform cortex, hippocampus and hypothalamic nuclei. Moderately expressed in skeletal muscle, heart. Weakly expressed in lung.

The protein resides in the nucleus. Its function is as follows. Transcriptional repressor involved in the regulation of the circadian rhythm by negatively regulating the activity of the clock genes and clock-controlled genes. Acts as the negative limb of a novel autoregulatory feedback loop (DEC loop) which differs from the one formed by the PER and CRY transcriptional repressors (PER/CRY loop). Both these loops are interlocked as it represses the expression of PER1 and in turn is repressed by PER1/2 and CRY1/2. Represses the activity of the circadian transcriptional activator: CLOCK-BMAL1 heterodimer by competing for the binding to E-box elements (5'-CACGTG-3') found within the promoters of its target genes. Negatively regulates its own expression and the expression of DBP and BHLHE41/DEC2. Acts as a corepressor of RXR and the RXR-LXR heterodimers and represses the ligand-induced RXRA/B/G, NR1H3/LXRA, NR1H4 and VDR transactivation activity. Inhibits HNF1A-mediated transactivation of CYP1A2, CYP2E1 and CYP3A11. The chain is Class E basic helix-loop-helix protein 41 (Bhlhb3) from Rattus norvegicus (Rat).